The chain runs to 375 residues: MKFELDTTDGRARRGRLVFERGVVETPAFMPVGTYGTVKGMTPEEVEATGAQIILGNTFHLWLRPGQEIMKLHGDLHDFMQWKGPILTDSGGFQVFSLGDIRKITEQGVHFRNPINGDPIFLDPEKSMEIQYDLGSDIVMIFDECTPYPADWDYAKRSMEMSLRWAKRSRDRFDSLGNKNALFGIIQGSVYEDLRDISVKGLVEIGFDGYAVGGLAVGEPKEDMHRILEHVCPQIPADKPRYLMGVGKPEDLVEGVRRGIDMFDCVMPTRNARNGHLFVTDGVVKIRNAKHKSDTAPLDAECDCYTCRNYSRAYLHHLDRCNEILGARLNTIHNLRYYQRLMAGLRKAIEEGKLESFVTDFYQRQGRTVPPLNVD.

The Proton acceptor role is filled by aspartate 89. Residues aspartate 89–phenylalanine 93, aspartate 143, glutamine 187, and glycine 214 each bind substrate. The interval glycine 245 to aspartate 251 is RNA binding. Catalysis depends on aspartate 264, which acts as the Nucleophile. The segment at threonine 269 to arginine 273 is RNA binding; important for wobble base 34 recognition. Positions 302, 304, 307, and 333 each coordinate Zn(2+).

The protein belongs to the queuine tRNA-ribosyltransferase family. Homodimer. Within each dimer, one monomer is responsible for RNA recognition and catalysis, while the other monomer binds to the replacement base PreQ1. Zn(2+) serves as cofactor.

The catalysed reaction is 7-aminomethyl-7-carbaguanine + guanosine(34) in tRNA = 7-aminomethyl-7-carbaguanosine(34) in tRNA + guanine. The protein operates within tRNA modification; tRNA-queuosine biosynthesis. Functionally, catalyzes the base-exchange of a guanine (G) residue with the queuine precursor 7-aminomethyl-7-deazaguanine (PreQ1) at position 34 (anticodon wobble position) in tRNAs with GU(N) anticodons (tRNA-Asp, -Asn, -His and -Tyr). Catalysis occurs through a double-displacement mechanism. The nucleophile active site attacks the C1' of nucleotide 34 to detach the guanine base from the RNA, forming a covalent enzyme-RNA intermediate. The proton acceptor active site deprotonates the incoming PreQ1, allowing a nucleophilic attack on the C1' of the ribose to form the product. After dissociation, two additional enzymatic reactions on the tRNA convert PreQ1 to queuine (Q), resulting in the hypermodified nucleoside queuosine (7-(((4,5-cis-dihydroxy-2-cyclopenten-1-yl)amino)methyl)-7-deazaguanosine). The protein is Queuine tRNA-ribosyltransferase of Klebsiella pneumoniae subsp. pneumoniae (strain ATCC 700721 / MGH 78578).